A 149-amino-acid chain; its full sequence is D-aminoacyl-tRNA deacylase (149 aa).

Positions 137 to 138 (GP) match the Gly-cisPro motif, important for rejection of L-amino acids motif.

This sequence belongs to the DTD family. In terms of assembly, homodimer.

It is found in the cytoplasm. It carries out the reaction glycyl-tRNA(Ala) + H2O = tRNA(Ala) + glycine + H(+). The enzyme catalyses a D-aminoacyl-tRNA + H2O = a tRNA + a D-alpha-amino acid + H(+). Its function is as follows. An aminoacyl-tRNA editing enzyme that deacylates mischarged D-aminoacyl-tRNAs. Also deacylates mischarged glycyl-tRNA(Ala), protecting cells against glycine mischarging by AlaRS. Acts via tRNA-based rather than protein-based catalysis; rejects L-amino acids rather than detecting D-amino acids in the active site. By recycling D-aminoacyl-tRNA to D-amino acids and free tRNA molecules, this enzyme counteracts the toxicity associated with the formation of D-aminoacyl-tRNA entities in vivo and helps enforce protein L-homochirality. The polypeptide is D-aminoacyl-tRNA deacylase (Clostridium botulinum (strain 657 / Type Ba4)).